The following is a 515-amino-acid chain: MHTPPDTGMAGKPFRATYIWTNIINNLQTQVEVKRRRHNLKIYPDCFLGSEAVDVVLAHIIQSKVCGDAEVPRFKAVRLCQALMEARVFEAVDTKVFGKEKRQAKFEDSSCSLYRFLNRQTPSTSGSETIGSGYNTQRNTNSPPFQRMEDSAYSNNSPVKTDKSLEDVLGNLNMNTTITPQMMNLGLSQELMDEIWRQQTVLRLLQLIELPLLESLLEGQESPRPPLHSMDSDPDLLYTSSYLDREILKAFSEAQADSWLSAAVDCQEFLPDQLVVDVSRGLAKCEEETSQYKQLLYGVLVQHYGQSDYPPLLTNHVFDIHSGVSELLVNGKCEQALESLQLCLKLQDSRSREELRRLLRFMALAGSPHQIKLHKEIENRMAVKRAFSNAIVYGTKLAKGKVDLLVLFMMDKHHDLFKIPVTLHKLVSDKLASIIKGTDPDRITGTTYCRHLSGKEFVETVQKTTREELWTLLKTIHENTKLSLKEKRRLLGQFYKGHPEIFVQYFGNRISNIYI.

One can recognise a DEP domain in the interval 27-118; it reads LQTQVEVKRR…SSCSLYRFLN (92 aa). Polar residues predominate over residues 121–144; the sequence is TPSTSGSETIGSGYNTQRNTNSPP. Residues 121–160 form a disordered region; the sequence is TPSTSGSETIGSGYNTQRNTNSPPFQRMEDSAYSNNSPVK.

Belongs to the DEPDC7 family.

The sequence is that of DEP domain-containing protein 7 (depdc7) from Danio rerio (Zebrafish).